The sequence spans 188 residues: Adenine phosphoribosyltransferase (188 aa).

It belongs to the purine/pyrimidine phosphoribosyltransferase family. As to quaternary structure, homodimer.

The protein localises to the cytoplasm. The enzyme catalyses AMP + diphosphate = 5-phospho-alpha-D-ribose 1-diphosphate + adenine. It participates in purine metabolism; AMP biosynthesis via salvage pathway; AMP from adenine: step 1/1. Catalyzes a salvage reaction resulting in the formation of AMP, that is energically less costly than de novo synthesis. The sequence is that of Adenine phosphoribosyltransferase from Burkholderia multivorans (strain ATCC 17616 / 249).